Consider the following 182-residue polypeptide: Ribosome-recycling factor (182 aa).

The interval 137-158 (KKSEKESEISEDQSRDEQDNVQ) is disordered.

This sequence belongs to the RRF family.

It localises to the cytoplasm. Responsible for the release of ribosomes from messenger RNA at the termination of protein biosynthesis. May increase the efficiency of translation by recycling ribosomes from one round of translation to another. The sequence is that of Ribosome-recycling factor from Prochlorococcus marinus (strain MIT 9211).